Consider the following 447-residue polypeptide: NADH-quinone oxidoreductase subunit N (447 aa).

A run of 13 helical transmembrane segments spans residues 4–24 (FAAL…MLAA), 27–47 (LPGL…VALA), 68–88 (LTGL…RPDG), 92–112 (EGPA…GAVH), 113–133 (AASL…LFVL), 146–166 (FLIL…LGHA), 181–201 (ALLT…LALV), 215–235 (PGAA…TALV), 245–265 (VWAL…NLAA), 280–300 (VGHA…APAA), 302–322 (LFYI…AALI), 342–362 (GAAM…AGFF), and 376–395 (AWAL…YYYL).

Belongs to the complex I subunit 2 family. NDH-1 is composed of 14 different subunits. Subunits NuoA, H, J, K, L, M, N constitute the membrane sector of the complex.

The protein resides in the cell inner membrane. It catalyses the reaction a quinone + NADH + 5 H(+)(in) = a quinol + NAD(+) + 4 H(+)(out). In terms of biological role, NDH-1 shuttles electrons from NADH, via FMN and iron-sulfur (Fe-S) centers, to quinones in the respiratory chain. The immediate electron acceptor for the enzyme in this species is believed to be ubiquinone. Couples the redox reaction to proton translocation (for every two electrons transferred, four hydrogen ions are translocated across the cytoplasmic membrane), and thus conserves the redox energy in a proton gradient. In Cereibacter sphaeroides (strain ATCC 17025 / ATH 2.4.3) (Rhodobacter sphaeroides), this protein is NADH-quinone oxidoreductase subunit N.